Consider the following 128-residue polypeptide: Disintegrin lebein-2-alpha (128 aa).

The N-terminal stretch at 1-20 is a signal peptide; that stretch reads MIQVLLVTICLAVFPFHGSS. Positions 21 to 46 are excised as a propeptide; it reads IILESGNVNDYEVVYPKKVTLLPTGA. A Disintegrin domain is found at 47-111; it reads MNSANPCCDP…SDCPRNPWKS (65 aa). 4 cysteine pairs are disulfide-bonded: Cys-53/Cys-76, Cys-67/Cys-73, Cys-72/Cys-97, and Cys-85/Cys-104. The Cell attachment site; atypical (MLD) motif lies at 89-91; that stretch reads MLD. The propeptide occupies 112–128; the sequence is EEDEMKWSATAKGSVLM.

It belongs to the disintegrin family. Dimeric disintegrin subfamily. As to quaternary structure, heterodimer with subunit beta; disulfide-linked. As to expression, expressed by the venom gland.

The protein resides in the secreted. Its function is as follows. Inhibits ADP-induced human platelet aggregation. Antagonist of alpha-IIb/beta-3 (ITGA2B/ITGB3). Also avidly binds to the laminin-binding beta-1 integrins (alpha-3/beta-1 (ITGA3/ITGB1), alpha-6/beta-1 (ITGA6/ITGB1), and alpha-7/beta-1 (ITGA7/ITGB1)) in an RGD-independent manner. The sequence is that of Disintegrin lebein-2-alpha from Macrovipera lebetinus (Levantine viper).